The primary structure comprises 549 residues: Cilia- and flagella-associated protein 45 (549 aa).

Residues 1–27 are disordered; sequence MPLSTAGVLSSASTASNRSRNRPRYRT. 2 coiled-coil regions span residues 119-232 and 259-393; these read KEEL…MMEV and IVEQ…KRNQ. The disordered stretch occupies residues 391-416; it reads RNQEVADREWRRKEKENAQKKMETEA.

It belongs to the CFAP45 family. Microtubule inner protein component of sperm flagellar doublet microtubules. Interacts with AK8; dimerization with AK8 may create a cavity at the interface of the dimer that can accommodate AMP. Interacts with CFAP52. Interacts with ENKUR. Directly interacts with DNALI1. Interacts with DNAH11. Interacts with DNAI1. In terms of tissue distribution, expressed in trachea multiciliated cells.

The protein localises to the cytoplasm. It localises to the cytoskeleton. Its subcellular location is the cilium axoneme. The protein resides in the flagellum axoneme. It is found in the cell projection. The protein localises to the cilium. It localises to the flagellum. Microtubule inner protein (MIP) part of the dynein-decorated doublet microtubules (DMTs) in cilia axoneme, which is required for motile cilia beating. It is an AMP-binding protein that may facilitate dynein ATPase-dependent ciliary and flagellar beating via adenine nucleotide homeostasis. May function as a donor of AMP to AK8 and hence promote ADP production. The sequence is that of Cilia- and flagella-associated protein 45 from Bos taurus (Bovine).